Here is a 418-residue protein sequence, read N- to C-terminus: Tyrosine--tRNA ligase 1 (418 aa).

Residue Tyr34 coordinates L-tyrosine. Positions 39–48 (PTGDSMHIGH) match the 'HIGH' region motif. Residues Tyr166 and Gln170 each contribute to the L-tyrosine site. The 'KMSKS' region motif lies at 228-232 (KFGKT). Position 231 (Lys231) interacts with ATP. Residues 350 to 416 (KNIVDWLVDT…GKKNYFLAKV (67 aa)) form the S4 RNA-binding domain.

Belongs to the class-I aminoacyl-tRNA synthetase family. TyrS type 1 subfamily. In terms of assembly, homodimer.

It localises to the cytoplasm. The catalysed reaction is tRNA(Tyr) + L-tyrosine + ATP = L-tyrosyl-tRNA(Tyr) + AMP + diphosphate + H(+). Catalyzes the attachment of tyrosine to tRNA(Tyr) in a two-step reaction: tyrosine is first activated by ATP to form Tyr-AMP and then transferred to the acceptor end of tRNA(Tyr). The polypeptide is Tyrosine--tRNA ligase 1 (Enterococcus faecalis (strain ATCC 700802 / V583)).